The sequence spans 150 residues: Monothiol glutaredoxin-S13 (150 aa).

Positions 30–52 are disordered; that stretch reads PSSSSSSLSWLTSGSPKPTSISN. Residues 31–44 show a composition bias toward low complexity; that stretch reads SSSSSSLSWLTSGS. One can recognise a Glutaredoxin domain in the interval 53–149; sequence KRSSNLVVME…PTLRQAGALW (97 aa). Residue C73 coordinates [2Fe-2S] cluster. The short motif at 147–150 is the Responsive for interaction with TGA factors element; the sequence is ALWL.

This sequence belongs to the glutaredoxin family. CC-type subfamily.

The protein localises to the cytoplasm. Its subcellular location is the nucleus. In terms of biological role, may only reduce GSH-thiol disulfides, but not protein disulfides. The polypeptide is Monothiol glutaredoxin-S13 (GRXS13) (Arabidopsis thaliana (Mouse-ear cress)).